Here is a 417-residue protein sequence, read N- to C-terminus: Serine hydroxymethyltransferase (417 aa).

Residues leucine 121 and 125–127 each bind (6S)-5,6,7,8-tetrahydrofolate; that span reads GHL. Position 229 is an N6-(pyridoxal phosphate)lysine (lysine 229). 355–357 contacts (6S)-5,6,7,8-tetrahydrofolate; it reads SPF.

This sequence belongs to the SHMT family. In terms of assembly, homodimer. Requires pyridoxal 5'-phosphate as cofactor.

Its subcellular location is the cytoplasm. It carries out the reaction (6R)-5,10-methylene-5,6,7,8-tetrahydrofolate + glycine + H2O = (6S)-5,6,7,8-tetrahydrofolate + L-serine. It participates in one-carbon metabolism; tetrahydrofolate interconversion. Its pathway is amino-acid biosynthesis; glycine biosynthesis; glycine from L-serine: step 1/1. Catalyzes the reversible interconversion of serine and glycine with tetrahydrofolate (THF) serving as the one-carbon carrier. This reaction serves as the major source of one-carbon groups required for the biosynthesis of purines, thymidylate, methionine, and other important biomolecules. Also exhibits THF-independent aldolase activity toward beta-hydroxyamino acids, producing glycine and aldehydes, via a retro-aldol mechanism. The polypeptide is Serine hydroxymethyltransferase (Xanthomonas euvesicatoria pv. vesicatoria (strain 85-10) (Xanthomonas campestris pv. vesicatoria)).